Consider the following 82-residue polypeptide: Sec-independent protein translocase protein TatA (82 aa).

A helical membrane pass occupies residues 1 to 21 (MGIFDWKHWIVILIVVVLVFG). The tract at residues 43 to 82 (VNTEEDDKKEQPAAQPAQPLNQPHTIDAQAQKVEEPARKD) is disordered.

This sequence belongs to the TatA/E family. The Tat system comprises two distinct complexes: a TatABC complex, containing multiple copies of TatA, TatB and TatC subunits, and a separate TatA complex, containing only TatA subunits. Substrates initially bind to the TatABC complex, which probably triggers association of the separate TatA complex to form the active translocon.

The protein resides in the cell inner membrane. In terms of biological role, part of the twin-arginine translocation (Tat) system that transports large folded proteins containing a characteristic twin-arginine motif in their signal peptide across membranes. TatA could form the protein-conducting channel of the Tat system. The sequence is that of Sec-independent protein translocase protein TatA from Pseudomonas paraeruginosa (strain DSM 24068 / PA7) (Pseudomonas aeruginosa (strain PA7)).